The primary structure comprises 635 residues: Threonine--tRNA ligase (635 aa).

The TGS domain maps to 1–61 (MVSIRLPDGS…DRDASLAIVT (61 aa)). Positions 242 to 533 (DHRKLGKQLD…LIEHHAGAMP (292 aa)) are catalytic. C333, H384, and H510 together coordinate Zn(2+).

The protein belongs to the class-II aminoacyl-tRNA synthetase family. As to quaternary structure, homodimer. It depends on Zn(2+) as a cofactor.

Its subcellular location is the cytoplasm. It catalyses the reaction tRNA(Thr) + L-threonine + ATP = L-threonyl-tRNA(Thr) + AMP + diphosphate + H(+). Its function is as follows. Catalyzes the attachment of threonine to tRNA(Thr) in a two-step reaction: L-threonine is first activated by ATP to form Thr-AMP and then transferred to the acceptor end of tRNA(Thr). Also edits incorrectly charged L-seryl-tRNA(Thr). The sequence is that of Threonine--tRNA ligase from Burkholderia cenocepacia (strain ATCC BAA-245 / DSM 16553 / LMG 16656 / NCTC 13227 / J2315 / CF5610) (Burkholderia cepacia (strain J2315)).